Reading from the N-terminus, the 55-residue chain is ATP synthase F(0) complex subunit 8 (55 aa).

A helical transmembrane segment spans residues 4–24 (LNPSPWLLILLFSWLIFLTML). The interval 36–55 (MPSTQNMCKQEPEPWTWPWA) is disordered.

It belongs to the ATPase protein 8 family. In terms of assembly, component of the ATP synthase complex composed at least of ATP5F1A/subunit alpha, ATP5F1B/subunit beta, ATP5MC1/subunit c (homooctomer), MT-ATP6/subunit a, MT-ATP8/subunit 8, ATP5ME/subunit e, ATP5MF/subunit f, ATP5MG/subunit g, ATP5MK/subunit k, ATP5MJ/subunit j, ATP5F1C/subunit gamma, ATP5F1D/subunit delta, ATP5F1E/subunit epsilon, ATP5PF/subunit F6, ATP5PB/subunit b, ATP5PD/subunit d, ATP5PO/subunit OSCP. ATP synthase complex consists of a soluble F(1) head domain (subunits alpha(3) and beta(3)) - the catalytic core - and a membrane F(0) domain - the membrane proton channel (subunits c, a, 8, e, f, g, k and j). These two domains are linked by a central stalk (subunits gamma, delta, and epsilon) rotating inside the F1 region and a stationary peripheral stalk (subunits F6, b, d, and OSCP).

It localises to the mitochondrion membrane. Subunit 8, of the mitochondrial membrane ATP synthase complex (F(1)F(0) ATP synthase or Complex V) that produces ATP from ADP in the presence of a proton gradient across the membrane which is generated by electron transport complexes of the respiratory chain. ATP synthase complex consist of a soluble F(1) head domain - the catalytic core - and a membrane F(1) domain - the membrane proton channel. These two domains are linked by a central stalk rotating inside the F(1) region and a stationary peripheral stalk. During catalysis, ATP synthesis in the catalytic domain of F(1) is coupled via a rotary mechanism of the central stalk subunits to proton translocation. In vivo, can only synthesize ATP although its ATP hydrolase activity can be activated artificially in vitro. Part of the complex F(0) domain. This Latimeria chalumnae (Coelacanth) protein is ATP synthase F(0) complex subunit 8.